Consider the following 284-residue polypeptide: Nucleotide-binding protein Shewmr4_0670 (284 aa).

8–15 is a binding site for ATP; the sequence is GRSGSGKS. 56-59 serves as a coordination point for GTP; it reads DVRN.

The protein belongs to the RapZ-like family.

Functionally, displays ATPase and GTPase activities. The chain is Nucleotide-binding protein Shewmr4_0670 from Shewanella sp. (strain MR-4).